The primary structure comprises 88 residues: Small ribosomal subunit protein uS15 (88 aa).

This sequence belongs to the universal ribosomal protein uS15 family. Part of the 30S ribosomal subunit. Forms a bridge to the 50S subunit in the 70S ribosome, contacting the 23S rRNA.

One of the primary rRNA binding proteins, it binds directly to 16S rRNA where it helps nucleate assembly of the platform of the 30S subunit by binding and bridging several RNA helices of the 16S rRNA. Functionally, forms an intersubunit bridge (bridge B4) with the 23S rRNA of the 50S subunit in the ribosome. The polypeptide is Small ribosomal subunit protein uS15 (Mycoplasmopsis synoviae (strain 53) (Mycoplasma synoviae)).